The following is a 370-amino-acid chain: Peptide chain release factor 1 (370 aa).

Glutamine 231 is modified (N5-methylglutamine). A compositionally biased stretch (basic and acidic residues) spans 284–293 (AREERERETR). The disordered stretch occupies residues 284-303 (AREERERETRAAQVGTGERS).

Belongs to the prokaryotic/mitochondrial release factor family. Methylated by PrmC. Methylation increases the termination efficiency of RF1.

The protein resides in the cytoplasm. Functionally, peptide chain release factor 1 directs the termination of translation in response to the peptide chain termination codons UAG and UAA. In Deinococcus geothermalis (strain DSM 11300 / CIP 105573 / AG-3a), this protein is Peptide chain release factor 1.